A 170-amino-acid chain; its full sequence is Shikimate kinase (170 aa).

ATP is bound at residue 11–16 (LSGKST). Serine 15 is a Mg(2+) binding site. Substrate contacts are provided by aspartate 33, arginine 57, and glycine 79. Arginine 119 provides a ligand contact to ATP. Arginine 137 contributes to the substrate binding site.

It belongs to the shikimate kinase family. As to quaternary structure, monomer. Mg(2+) serves as cofactor.

Its subcellular location is the cytoplasm. It catalyses the reaction shikimate + ATP = 3-phosphoshikimate + ADP + H(+). It participates in metabolic intermediate biosynthesis; chorismate biosynthesis; chorismate from D-erythrose 4-phosphate and phosphoenolpyruvate: step 5/7. In terms of biological role, catalyzes the specific phosphorylation of the 3-hydroxyl group of shikimic acid using ATP as a cosubstrate. The sequence is that of Shikimate kinase from Clostridium botulinum (strain ATCC 19397 / Type A).